Reading from the N-terminus, the 296-residue chain is GTPase Era (296 aa).

The Era-type G domain maps to lysine 3–glutamate 170. The interval glycine 11–serine 18 is G1. Residue glycine 11–serine 18 coordinates GTP. The interval glutamine 37 to asparagine 41 is G2. The G3 stretch occupies residues aspartate 58 to glycine 61. Residues aspartate 58–isoleucine 62 and asparagine 120–aspartate 123 contribute to the GTP site. The segment at asparagine 120–aspartate 123 is G4. A G5 region spans residues isoleucine 149–alanine 151. Residues leucine 201 to glutamate 278 enclose the KH type-2 domain.

It belongs to the TRAFAC class TrmE-Era-EngA-EngB-Septin-like GTPase superfamily. Era GTPase family. In terms of assembly, monomer.

It is found in the cytoplasm. Its subcellular location is the cell membrane. Functionally, an essential GTPase that binds both GDP and GTP, with rapid nucleotide exchange. Plays a role in 16S rRNA processing and 30S ribosomal subunit biogenesis and possibly also in cell cycle regulation and energy metabolism. This is GTPase Era from Clostridium botulinum (strain Okra / Type B1).